Consider the following 225-residue polypeptide: NAD(P)H-quinone oxidoreductase subunit K, chloroplastic (225 aa).

Cys43, Cys44, Cys108, and Cys139 together coordinate [4Fe-4S] cluster.

The protein belongs to the complex I 20 kDa subunit family. In terms of assembly, NDH is composed of at least 16 different subunits, 5 of which are encoded in the nucleus. [4Fe-4S] cluster is required as a cofactor.

The protein localises to the plastid. It is found in the chloroplast thylakoid membrane. The catalysed reaction is a plastoquinone + NADH + (n+1) H(+)(in) = a plastoquinol + NAD(+) + n H(+)(out). The enzyme catalyses a plastoquinone + NADPH + (n+1) H(+)(in) = a plastoquinol + NADP(+) + n H(+)(out). Its function is as follows. NDH shuttles electrons from NAD(P)H:plastoquinone, via FMN and iron-sulfur (Fe-S) centers, to quinones in the photosynthetic chain and possibly in a chloroplast respiratory chain. The immediate electron acceptor for the enzyme in this species is believed to be plastoquinone. Couples the redox reaction to proton translocation, and thus conserves the redox energy in a proton gradient. This is NAD(P)H-quinone oxidoreductase subunit K, chloroplastic from Nicotiana tabacum (Common tobacco).